The sequence spans 475 residues: Cytosolic non-specific dipeptidase (475 aa).

S58 carries the phosphoserine modification. Position 99 (H99) interacts with Mn(2+). The active site involves D101. D132 is a Mn(2+) binding site. Residue E166 is the Proton acceptor of the active site. Residues 166–167 (EE), D195, and H228 contribute to the substrate site. Mn(2+) contacts are provided by E167 and D195. S299 bears the Phosphoserine mark. Substrate contacts are provided by T330, R343, S417, and H445. A Mn(2+)-binding site is contributed by H445.

Belongs to the peptidase M20A family. Homodimer. The cofactor is Mn(2+). Highly expressed in the parafascicular nucleus of the thalamus, tuberomammillary nucleus of the hypothalamus and the mitral cell layer of the olfactory bulb.

It localises to the cytoplasm. The catalysed reaction is Hydrolysis of dipeptides, preferentially hydrophobic dipeptides including prolyl amino acids.. The enzyme catalyses L-threonyl-L-threonine + H2O = 2 L-threonine. It catalyses the reaction L-threonyl-L-serine + H2O = L-threonine + L-serine. It carries out the reaction L-seryl-L-threonine + H2O = L-threonine + L-serine. The catalysed reaction is L-cysteinylglycine + H2O = L-cysteine + glycine. The enzyme catalyses L-alanyl-L-cysteine + H2O = L-cysteine + L-alanine. It catalyses the reaction (S)-lactate + L-phenylalanine = N-[(S)-lactoyl]-L-phenylalanine + H2O. Inhibited by bestatin. In terms of biological role, catalyzes the peptide bond hydrolysis in dipeptides, displaying a non-redundant activity toward threonyl dipeptides. Mediates threonyl dipeptide catabolism in a tissue-specific way. Has high dipeptidase activity toward cysteinylglycine, an intermediate metabolite in glutathione metabolism. Metabolizes N-lactoyl-amino acids, both through hydrolysis to form lactic acid and amino acids, as well as through their formation by reverse proteolysis. Plays a role in the regulation of cell cycle arrest and apoptosis. This is Cytosolic non-specific dipeptidase (Cndp2) from Mus musculus (Mouse).